Here is a 581-residue protein sequence, read N- to C-terminus: Glutamyl-tRNA reductase (581 aa).

Substrate-binding positions include 49–52 (TCNR), S109, 114–116 (EGQ), and Q120. C50 (nucleophile) is an active-site residue. Position 192–197 (192–197 (GAGSMS)) interacts with NADP(+). The segment at 292–416 (PAVEDTAVQE…AEAPRPQPVL (125 aa)) is insert.

The protein belongs to the glutamyl-tRNA reductase family. As to quaternary structure, homodimer.

It catalyses the reaction (S)-4-amino-5-oxopentanoate + tRNA(Glu) + NADP(+) = L-glutamyl-tRNA(Glu) + NADPH + H(+). It functions in the pathway porphyrin-containing compound metabolism; protoporphyrin-IX biosynthesis; 5-aminolevulinate from L-glutamyl-tRNA(Glu): step 1/2. Functionally, catalyzes the NADPH-dependent reduction of glutamyl-tRNA(Glu) to glutamate 1-semialdehyde (GSA). The chain is Glutamyl-tRNA reductase from Streptomyces coelicolor (strain ATCC BAA-471 / A3(2) / M145).